A 162-amino-acid polypeptide reads, in one-letter code: Proepiregulin (162 aa).

An N-terminal signal peptide occupies residues 1-22; the sequence is METLPASWVLTLLCLGSHLLQA. The propeptide occupies 23-55; that stretch reads VISTTVIPSCIPGESEDNCTALVQMEDDPRVAQ. N-linked (GlcNAc...) asparagine glycosylation occurs at asparagine 40. At 53-112 the chain is on the extracellular side; it reads VAQVQITKCSSDMDGYCLHGQCIYLVDMREKFCRCEVGYTGLRCEHFFLTVHQPLSKEYV. The EGF-like domain maps to 57 to 97; sequence QITKCSSDMDGYCLHGQCIYLVDMREKFCRCEVGYTGLRCE. 3 disulfide bridges follow: cysteine 61–cysteine 74, cysteine 69–cysteine 85, and cysteine 87–cysteine 96. Residues 102-162 constitute a propeptide, removed in mature form; it reads TVHQPLSKEY…TSGDPVLPQV (61 aa). The chain crosses the membrane as a helical span at residues 113-133; the sequence is ALTVILIFLFLIITAGCIYYF. Residues 134–162 are Cytoplasmic-facing; the sequence is CRWYKNRKSKKSREEYERVTSGDPVLPQV.

As to quaternary structure, interacts with EGFR and ERBB4.

The protein resides in the secreted. Its subcellular location is the extracellular space. The protein localises to the cell membrane. Ligand of the EGF receptor/EGFR and ERBB4. Stimulates EGFR and ERBB4 tyrosine phosphorylation. Contributes to inflammation, wound healing, tissue repair, and oocyte maturation by regulating angiogenesis and vascular remodeling and by stimulating cell proliferation. The polypeptide is Proepiregulin (Ereg) (Mus musculus (Mouse)).